A 663-amino-acid polypeptide reads, in one-letter code: Beta-galactosidase YesZ (663 aa).

Arginine 106 contacts substrate. Cysteine 110 is a binding site for Zn(2+). Asparagine 144 is a substrate binding site. Residue glutamate 145 is the Proton donor of the active site. Zn(2+) contacts are provided by cysteine 153, cysteine 155, and cysteine 158. Glutamate 296 (nucleophile) is an active-site residue. A substrate-binding site is contributed by 345–348; the sequence is EISH.

The protein belongs to the glycosyl hydrolase 42 family. Homotrimer.

It carries out the reaction Hydrolysis of terminal non-reducing beta-D-galactose residues in beta-D-galactosides.. Functionally, may play a role in the degradation of rhamnogalacturonan derived from plant cell walls. This is Beta-galactosidase YesZ (yesZ) from Bacillus subtilis (strain 168).